The primary structure comprises 227 residues: Cell wall mannoprotein CIS3 (227 aa).

Positions 1–21 (MQFKNVALAASVAALSATASA) are cleaved as a signal peptide. Residues 22–64 (EGYTPGEPWSTLTPTGSISCGAAEYTTTFGIAVQAITSSKAKR) constitute a propeptide that is removed on maturation. The PIR1/2/3 repeat unit spans residues 65 to 78 (DVISQIGDGQVQAT). Ser68 is a glycosylation site (O-linked (Man) serine). O-linked (Man) threonine glycosylation occurs at Thr78. Residues 83–124 (AQATDSQAQATTTATPTSSEKISSSASKTSTNATSSSCATPS) are compositionally biased toward low complexity. Residues 83-127 (AQATDSQAQATTTATPTSSEKISSSASKTSTNATSSSCATPSLKD) form a disordered region. Residues Ser105, Ser106, Ser107, and Ser109 are each glycosylated (O-linked (Man) serine). O-linked (Man) threonine glycosylation occurs at Thr111. Ser112 is a glycosylation site (O-linked (Man) serine). A glycan (O-linked (Man) threonine) is linked at Thr113. Asn114 carries an N-linked (GlcNAc...) asparagine glycan. Thr116 carries O-linked (Man) threonine glycosylation. Ser117 and Ser118 each carry an O-linked (Man) serine glycan.

It belongs to the PIR protein family. In terms of processing, covalently linked to beta-1,3-glucan of the inner cell wall layer via an alkali-sensitive ester linkage between the gamma-carboxyl group of glutamic acid, arising from Gln-74 within the PIR1/2/3 repeat, and hydroxyl groups of glucoses of beta-1,3-glucan chains. Extensively O-mannosylated. Also N-glycosylated.

The protein resides in the secreted. The protein localises to the cell wall. Component of the outer cell wall layer. Required for stability of the cell wall and for optimal growth. Required for resistance against several antifungal and cell wall-perturbing agents. This is Cell wall mannoprotein CIS3 (CIS3) from Saccharomyces cerevisiae (strain ATCC 204508 / S288c) (Baker's yeast).